Here is a 376-residue protein sequence, read N- to C-terminus: Erythronate-4-phosphate dehydrogenase (376 aa).

Substrate-binding residues include serine 45 and threonine 67. NAD(+) contacts are provided by residues aspartate 147, 209-211, and aspartate 235; that span reads ASR. The active site involves arginine 211. Residue glutamate 240 is part of the active site. The active-site Proton donor is histidine 257. Glycine 260 lines the NAD(+) pocket. Tyrosine 261 serves as a coordination point for substrate.

Belongs to the D-isomer specific 2-hydroxyacid dehydrogenase family. PdxB subfamily. In terms of assembly, homodimer.

Its subcellular location is the cytoplasm. It carries out the reaction 4-phospho-D-erythronate + NAD(+) = (R)-3-hydroxy-2-oxo-4-phosphooxybutanoate + NADH + H(+). The protein operates within cofactor biosynthesis; pyridoxine 5'-phosphate biosynthesis; pyridoxine 5'-phosphate from D-erythrose 4-phosphate: step 2/5. In terms of biological role, catalyzes the oxidation of erythronate-4-phosphate to 3-hydroxy-2-oxo-4-phosphonooxybutanoate. This Aeromonas hydrophila subsp. hydrophila (strain ATCC 7966 / DSM 30187 / BCRC 13018 / CCUG 14551 / JCM 1027 / KCTC 2358 / NCIMB 9240 / NCTC 8049) protein is Erythronate-4-phosphate dehydrogenase.